A 1447-amino-acid polypeptide reads, in one-letter code: DNA-directed RNA polymerase subunit beta' (1447 aa).

Positions 70, 72, 85, and 88 each coordinate Zn(2+). Residues Asp460, Asp462, and Asp464 each contribute to the Mg(2+) site. Zn(2+) contacts are provided by Cys890, Cys964, Cys971, and Cys974.

This sequence belongs to the RNA polymerase beta' chain family. As to quaternary structure, the RNAP catalytic core consists of 2 alpha, 1 beta, 1 beta' and 1 omega subunit. When a sigma factor is associated with the core the holoenzyme is formed, which can initiate transcription. Mg(2+) serves as cofactor. Requires Zn(2+) as cofactor.

It carries out the reaction RNA(n) + a ribonucleoside 5'-triphosphate = RNA(n+1) + diphosphate. Its function is as follows. DNA-dependent RNA polymerase catalyzes the transcription of DNA into RNA using the four ribonucleoside triphosphates as substrates. This chain is DNA-directed RNA polymerase subunit beta', found in Desulfosudis oleivorans (strain DSM 6200 / JCM 39069 / Hxd3) (Desulfococcus oleovorans).